A 243-amino-acid chain; its full sequence is ATP synthase subunit a, chloroplastic (243 aa).

5 helical membrane passes run 32–52, 91–111, 130–150, 195–215, and 216–236; these read AQVL…ALIA, IPFV…GALI, INTT…AGLN, LVVA…MMFL, and GLFT…AYIG.

The protein belongs to the ATPase A chain family. F-type ATPases have 2 components, CF(1) - the catalytic core - and CF(0) - the membrane proton channel. CF(1) has five subunits: alpha(3), beta(3), gamma(1), delta(1), epsilon(1). CF(0) has four main subunits: a, b, b' and c.

The protein localises to the plastid. The protein resides in the chloroplast thylakoid membrane. In terms of biological role, key component of the proton channel; it plays a direct role in the translocation of protons across the membrane. The chain is ATP synthase subunit a, chloroplastic from Chaetosphaeridium globosum (Charophycean green alga).